The sequence spans 157 residues: 17.6 kDa class I heat shock protein 3 (157 aa).

The sHSP domain occupies 43-157; it reads DVAAFTNAKV…PEVKSIDISG (115 aa).

This sequence belongs to the small heat shock protein (HSP20) family. As to quaternary structure, may form oligomeric structures.

It is found in the cytoplasm. This is 17.6 kDa class I heat shock protein 3 (HSP17.6C) from Arabidopsis thaliana (Mouse-ear cress).